The sequence spans 548 residues: Kinetochore and Eb1-associated basic protein (548 aa).

Disordered regions lie at residues 1–51 (MSSM…PKHP) and 82–181 (YRSS…IRPK). 3 stretches are compositionally biased toward basic and acidic residues: residues 20-29 (RTKELLERQR), 104-116 (RTWEGPKTPEFRS), and 127-141 (PRPRRAKELLEDLRS). The interval 100–253 (QNRQRTWEGP…TTSKRKLDFK (154 aa)) is important for kinetochore and microtubule localization. Over residues 144–155 (QGTPATKIPSQR) the composition is skewed to polar residues. The SXIP motif 1 motif lies at 149–152 (TKIP). A compositionally biased stretch (basic and acidic residues) spans 156–165 (NPKENQELSK). The segment covering 166–175 (SHTCIPSSEP) has biased composition (polar residues). The short motif at 168-171 (TCIP) is the SXIP motif 2 element. The tract at residues 237 to 372 (SDKGIKLTTS…MCALPVVSEK (136 aa)) is CH (calponin-homology)-like region, which is not required for kinetochore and microtubule localization. The stretch at 386-457 (YDVMSLQQKF…LQLQRLRLQE (72 aa)) forms a coiled coil.

In terms of assembly, interacts with Eb1 via the two SxIP motifs; the interaction is not required for kebab kinetochore localization.

It is found in the cytoplasm. Its subcellular location is the perinuclear region. The protein localises to the chromosome. It localises to the centromere. The protein resides in the kinetochore. It is found in the cytoskeleton. Its subcellular location is the spindle. The polypeptide is Kinetochore and Eb1-associated basic protein (Drosophila melanogaster (Fruit fly)).